Here is a 364-residue protein sequence, read N- to C-terminus: Histidinol-phosphate aminotransferase (364 aa).

N6-(pyridoxal phosphate)lysine is present on lysine 226.

The protein belongs to the class-II pyridoxal-phosphate-dependent aminotransferase family. Histidinol-phosphate aminotransferase subfamily. Homodimer. Pyridoxal 5'-phosphate is required as a cofactor.

The enzyme catalyses L-histidinol phosphate + 2-oxoglutarate = 3-(imidazol-4-yl)-2-oxopropyl phosphate + L-glutamate. The protein operates within amino-acid biosynthesis; L-histidine biosynthesis; L-histidine from 5-phospho-alpha-D-ribose 1-diphosphate: step 7/9. The sequence is that of Histidinol-phosphate aminotransferase from Campylobacter jejuni subsp. jejuni serotype O:6 (strain 81116 / NCTC 11828).